Reading from the N-terminus, the 220-residue chain is GTP-binding protein YPT53 (220 aa).

Residues 19 to 26 (GESAVGKS), 67 to 71 (DTAGQ), and 125 to 128 (NKMD) contribute to the GTP site. 2 S-geranylgeranyl cysteine lipidation sites follow: C218 and C220. C220 is subject to Cysteine methyl ester.

Belongs to the small GTPase superfamily. Rab family.

The protein localises to the cell membrane. Its function is as follows. Required for transport in the endocytic pathway and for correct sorting of the vacuolar hydrolases suggesting a possible intersection of the endocytic with the vacuolar sorting pathway. May be involved in recruiting the MON1-CCZ1 complex to membranes enriched in phosphatidylinositol 3-phosphate (PtdIns[3]P) or other charged lipids, leading to recruitment of YPT7. This Saccharomyces cerevisiae (strain ATCC 204508 / S288c) (Baker's yeast) protein is GTP-binding protein YPT53 (YPT53).